Consider the following 331-residue polypeptide: Ketol-acid reductoisomerase (NADP(+)) (331 aa).

The 181-residue stretch at 1–181 (MKVYYEKDAN…GGSRSGVIET (181 aa)) folds into the KARI N-terminal Rossmann domain. NADP(+)-binding positions include 24-27 (YGSQ), R47, and 82-85 (DQVQ). H107 is an active-site residue. G133 serves as a coordination point for NADP(+). The KARI C-terminal knotted domain maps to 182–327 (TFREETETDL…GELRGMMPWL (146 aa)). The Mg(2+) site is built by D190, E194, E226, and E230. Residue S251 participates in substrate binding.

It belongs to the ketol-acid reductoisomerase family. The cofactor is Mg(2+).

It catalyses the reaction (2R)-2,3-dihydroxy-3-methylbutanoate + NADP(+) = (2S)-2-acetolactate + NADPH + H(+). The catalysed reaction is (2R,3R)-2,3-dihydroxy-3-methylpentanoate + NADP(+) = (S)-2-ethyl-2-hydroxy-3-oxobutanoate + NADPH + H(+). It functions in the pathway amino-acid biosynthesis; L-isoleucine biosynthesis; L-isoleucine from 2-oxobutanoate: step 2/4. The protein operates within amino-acid biosynthesis; L-valine biosynthesis; L-valine from pyruvate: step 2/4. Involved in the biosynthesis of branched-chain amino acids (BCAA). Catalyzes an alkyl-migration followed by a ketol-acid reduction of (S)-2-acetolactate (S2AL) to yield (R)-2,3-dihydroxy-isovalerate. In the isomerase reaction, S2AL is rearranged via a Mg-dependent methyl migration to produce 3-hydroxy-3-methyl-2-ketobutyrate (HMKB). In the reductase reaction, this 2-ketoacid undergoes a metal-dependent reduction by NADPH to yield (R)-2,3-dihydroxy-isovalerate. This chain is Ketol-acid reductoisomerase (NADP(+)), found in Nitratidesulfovibrio vulgaris (strain ATCC 29579 / DSM 644 / CCUG 34227 / NCIMB 8303 / VKM B-1760 / Hildenborough) (Desulfovibrio vulgaris).